Here is a 340-residue protein sequence, read N- to C-terminus: C5a anaphylatoxin chemotactic receptor 1 (340 aa).

Topologically, residues 1–30 are extracellular; that stretch reads TPDYGHYDDKDTLDANTPVDKTSNTLRVPD. The required for CHIPS binding stretch occupies residues 3 to 11; the sequence is DYGHYDDKD. A sulfotyrosine mark is found at tyrosine 4 and tyrosine 7. The segment at 14–23 is involved in C5a binding; the sequence is DANTPVDKTS. A helical membrane pass occupies residues 31 to 57; sequence ILALVIFAVVFLVGVLRNALVVWVTAF. At 58–62 the chain is on the cytoplasmic side; sequence EAKRT. Residues 63–86 traverse the membrane as a helical segment; that stretch reads INAIWFLNLAVADFLSCLALPILF. Residues 87–103 are Extracellular-facing; it reads TSIVQHHHWPFGGAACR. Cysteine 102 and cysteine 181 form a disulfide bridge. Residues 104–125 traverse the membrane as a helical segment; it reads ILPSLILLNMYASILLLATISA. At 126–146 the chain is on the cytoplasmic side; that stretch reads DRFLLVFNPIWCQNFRGAGLA. Residues 147–167 traverse the membrane as a helical segment; that stretch reads WIACAVAWGLALLLTIPSFLY. Residues 168–193 are Extracellular-facing; that stretch reads RVVREEYFPPKVLCGVDHGHDKRRER. A helical transmembrane segment spans residues 194–219; sequence AVAIARLVLGFVWPLLTLTMCYTFLL. The Cytoplasmic portion of the chain corresponds to 220–235; that stretch reads LRTWSRRATRSTKTLK. Residues 236 to 258 traverse the membrane as a helical segment; it reads VVVAVVASFFIFWLPYQVTGMMM. Topologically, residues 259-275 are extracellular; sequence SFLEPSSPTFLLLKKLD. The helical transmembrane segment at 276–296 threads the bilayer; it reads SLCISFAYINCCINPIIYVVA. Residues 297–340 lie on the Cytoplasmic side of the membrane; the sequence is GQGFQGRLRKSLPSLLRNVLTEESMVRESKSFTRSTVDTMAQKT. 6 positions are modified to phosphoserine: serine 307, serine 310, serine 320, serine 325, serine 327, and serine 331.

Belongs to the G-protein coupled receptor 1 family. Homodimer. May also form higher-order oligomers. Interacts (when phosphorylated) with ARRB1 and ARRB2; the interaction is associated with internalization of C5aR. Interacts (via N-terminal domain) with S.aureus chemotaxis inhibitory protein (CHIPS); the interaction blocks the receptor and may thus inhibit the immune response. Post-translationally, sulfation plays a critical role in the association of C5aR with C5a, but no significant role in the ability of the receptor to transduce a signal and mobilize calcium in response to a small peptide agonist. Sulfation at Tyr-7 is important for CHIPS binding. In terms of processing, phosphorylated on serine residues in response to C5a binding, resulting in internalization of the receptor and short-term desensitization to C5a.

The protein localises to the cell membrane. It localises to the cytoplasmic vesicle. In terms of biological role, receptor for the chemotactic and inflammatory peptide anaphylatoxin C5a. The ligand interacts with at least two sites on the receptor: a high-affinity site on the extracellular N-terminus, and a second site in the transmembrane region which activates downstream signaling events. Receptor activation stimulates chemotaxis, granule enzyme release, intracellular calcium release and superoxide anion production. The polypeptide is C5a anaphylatoxin chemotactic receptor 1 (C5AR1) (Macaca mulatta (Rhesus macaque)).